A 76-amino-acid polypeptide reads, in one-letter code: Rhesus theta defensin-1/3 subunit A (76 aa).

A signal peptide spans 1–22 (MRTFALLTAMLLLVALHAQAEA). Positions 23-64 (RQARADEAAAQQQPGTDDQGMAHSFTWPENAALPLSESAKGL) are excised as a propeptide. The disordered stretch occupies residues 25-45 (ARADEAAAQQQPGTDDQGMAH). Arginine 65 participates in a covalent cross-link: Cyclopeptide (Arg-Cys) (interchain with C-73 in subunit A); in form RTD-3. Arginine 65 participates in a covalent cross-link: Cyclopeptide (Arg-Cys) (interchain with C-73 in subunit B); in form RTD-1. The cysteines at positions 68 and 73 are disulfide-linked. A Cyclopeptide (Cys-Arg) (interchain with R-65 in subunit A); in form RTD-3 cross-link involves residue cysteine 73. Cysteine 73 is covalently cross-linked (Cyclopeptide (Cys-Arg) (interchain with R-65 in subunit B); in form RTD-1). The propeptide occupies 74-76 (RLL).

This sequence belongs to the alpha-defensin family. Theta subfamily. As to quaternary structure, RTD-1 is a cyclic heterodimer composed of subunits A and B; disulfide-linked. RTD-3 is a cyclic homodimer composed of two subunits A; disulfide-linked. Forms a cyclic peptide with subunit A (RTD-3) or with subunit B (RTD-1). An additional intersubunit disulfide bond is formed. As to expression, RTD-1 is expressed in bone marrow. Detected in promyelocytes, myelocytes and mature neutrophils and monocytes.

In terms of biological role, RTD-1 and RTD-3 have similar antimicrobial activities against the Gram-positive bacteria S.aureus 502A and L.monocytogenes, the Gram-negative bacteria S.typhimurium and E.coli ML35, and the fungi C.albicans 16820 and C.neoformans 271A. The chain is Rhesus theta defensin-1/3 subunit A (RTD1A) from Macaca mulatta (Rhesus macaque).